The sequence spans 391 residues: Na(+)/H(+) antiporter NhaA 1 (391 aa).

Helical transmembrane passes span 19–39 (FLAS…AALI), 56–76 (VWLG…IFFL), 98–118 (ALPG…YIAI), 128–148 (GWAI…SLLG), 157–177 (VFLA…IAFF), 180–200 (SGLN…LIAL), 208–228 (LLPY…SGVH), 264–284 (VAFA…LSGI), 297–317 (VALG…VLAI), 335–355 (GVAI…NLAF), and 364–384 (EVKV…ILLL).

This sequence belongs to the NhaA Na(+)/H(+) (TC 2.A.33) antiporter family.

The protein localises to the cell inner membrane. It carries out the reaction Na(+)(in) + 2 H(+)(out) = Na(+)(out) + 2 H(+)(in). Its function is as follows. Na(+)/H(+) antiporter that extrudes sodium in exchange for external protons. The polypeptide is Na(+)/H(+) antiporter NhaA 1 (Pseudomonas savastanoi pv. phaseolicola (strain 1448A / Race 6) (Pseudomonas syringae pv. phaseolicola (strain 1448A / Race 6))).